Here is a 531-residue protein sequence, read N- to C-terminus: Na(+)/H(+) antiporter NhaB (531 aa).

11 helical membrane passes run Ile23–Trp45, Pro66–Leu86, Leu97–Phe117, Val130–Ile164, Leu206–Pro226, Leu244–Val264, Ala307–Ile327, Glu352–Ile372, Leu393–Gly413, Ala451–Ile471, and Met478–Glu498.

It belongs to the NhaB Na(+)/H(+) (TC 2.A.34) antiporter family.

The protein localises to the cell inner membrane. The enzyme catalyses 2 Na(+)(in) + 3 H(+)(out) = 2 Na(+)(out) + 3 H(+)(in). Functionally, na(+)/H(+) antiporter that extrudes sodium in exchange for external protons. The protein is Na(+)/H(+) antiporter NhaB of Shewanella loihica (strain ATCC BAA-1088 / PV-4).